A 267-amino-acid chain; its full sequence is Putative transcription factor Ovo-like 1 (267 aa).

4 C2H2-type zinc fingers span residues 118-140, 146-168, 174-197, and 213-235; these read FTCRVCQKAFTYQRMLNRHMKCH, HLCTYCGKGFNDTFDLKRHVRTH, YKCSLCDKAFTQRCSLESHLKKIH, and YVCEECGCTSESQEGHVLHLKEH.

As to expression, expressed in fetal kidney, and also in adult pancreas and placenta. Not expressed in intestine, peripheral blood lymphocytes and ovary.

The protein localises to the nucleus. In terms of biological role, putative transcription factor. Involved in hair formation and spermatogenesis. May function in the differentiation and/or maintenance of the urogenital system. In Homo sapiens (Human), this protein is Putative transcription factor Ovo-like 1 (OVOL1).